A 225-amino-acid polypeptide reads, in one-letter code: Suppressor of cytokine signaling 3 (225 aa).

The segment at 22 to 33 is kinase inhibitory region (KIR); the sequence is LKTFSSKSEYQL. Residues 34–45 are extended SH2 subdomain (ESS); it reads VVNAVRKLQESG. In terms of domain architecture, SH2 spans 46 to 142; that stretch reads FYWSAVTGGE…APSFSLPPTE (97 aa). A disordered region spans residues 141–160; that stretch reads TEPSFEVQEQPPAQALPGGT. The SOCS box domain occupies 177 to 224; sequence VLSRPLSSNVATLQHLCRKTVNGHLDSYEKVTQLPGPIREFLDQYDAP.

As to quaternary structure, interacts with multiple activated proteins of the tyrosine kinase signaling pathway including IGF1 receptor, insulin receptor and JAK2. Binding to JAK2 is mediated through the KIR and SH2 domains to a phosphorylated tyrosine residue within the JAK2 JH1 domain. Binds specific activated tyrosine residues of the leptin, EPO, IL12, GSCF and gp130 receptors. Interaction with CSNK1E stabilize SOCS3 protein. Component of the probable ECS(SOCS3) E3 ubiquitin-protein ligase complex which contains CUL5, RNF7/RBX2, Elongin BC complex and SOCS3. Interacts with CUL5, RNF7, ELOB and ELOC. Interacts with FGFR3. Interacts with INSR. Interacts with BCL10; this interaction may interfere with BCL10-binding with PELI2. Interacts with NOD2 (via CARD domain); the interaction promotes NOD2 degradation. Phosphorylated on tyrosine residues after stimulation by the cytokines, IL-2, EPO or IGF1.

It participates in protein modification; protein ubiquitination. SOCS family proteins form part of a classical negative feedback system that regulates cytokine signal transduction. SOCS3 is involved in negative regulation of cytokines that signal through the JAK/STAT pathway. Inhibits cytokine signal transduction by binding to tyrosine kinase receptors including IL6ST/gp130, LIF, erythropoietin, insulin, IL12, GCSF and leptin receptors. Binding to JAK2 inhibits its kinase activity and regulates IL6 signaling. Suppresses fetal liver erythropoiesis. Regulates onset and maintenance of allergic responses mediated by T-helper type 2 cells. Probable substrate recognition component of a SCF-like ECS (Elongin BC-CUL2/5-SOCS-box protein) E3 ubiquitin-protein ligase complex which mediates the ubiquitination and subsequent proteasomal degradation of target proteins. In Rattus norvegicus (Rat), this protein is Suppressor of cytokine signaling 3.